Consider the following 255-residue polypeptide: 7alpha-hydroxysteroid dehydrogenase (255 aa).

Residues Ile23, 42–43 (DI), 68–69 (DI), and Asn95 each bind NAD(+). Residues Gly99, Ser146, Asn151, and Tyr159 each coordinate glycochenodeoxycholate. Residues Tyr159, Lys163, and 192–194 (ILT) each bind NAD(+). The Proton acceptor role is filled by Tyr159.

This sequence belongs to the short-chain dehydrogenases/reductases (SDR) family. In terms of assembly, homotetramer.

It catalyses the reaction cholate + NAD(+) = 3alpha,12alpha-dihydroxy-7-oxo-5beta-cholanate + NADH + H(+). The enzyme catalyses chenodeoxycholate + NAD(+) = 7-oxolithocholate + NADH + H(+). It carries out the reaction taurochenodeoxycholate + NAD(+) = 7-oxotaurolithocholate + NADH + H(+). The catalysed reaction is taurocholate + NAD(+) = 7-oxo-taurodeoxycholate + NADH + H(+). It catalyses the reaction glycocholate + NAD(+) = 7-oxo-glycodeoxycholate + NADH + H(+). The enzyme catalyses glycochenodeoxycholate + NAD(+) = 7-oxoglycolithocholate + NADH + H(+). Functionally, 7alpha-hydroxysteroid dehydrogenase involved in the metabolism of bile acids. Catalyzes the NAD(+)-dependent oxidation of the 7alpha-hydroxy group of 7alpha-hydroxysteroids, such as the major human bile acids cholate and chenodeoxycholate, to the corresponding 7-oxosteroids. To a lesser extent, can also act on taurochenodeoxycholate, taurocholate and glycocholate. Can also use glycochenodeoxycholate as substrate. Is not able to use NADP(+) instead of NAD(+) as the electron acceptor. In Escherichia coli O157:H7, this protein is 7alpha-hydroxysteroid dehydrogenase (hdhA).